Consider the following 559-residue polypeptide: Potassium-transporting ATPase potassium-binding subunit (559 aa).

13 consecutive transmembrane segments (helical) span residues 5–25 (GFLLIASFLLILLVLAKPLGS), 27–47 (LARLIAAVPLPGVAGVERILW), 63–83 (LLALLTLNLLGLGILFCLLFW), 132–152 (GLTVQNFLSAATGIAVVFALI), 170–190 (LVRITLWILFPVALIIALFFI), 253–273 (LAQMLAIFLIPAALCFAFGEA), 283–303 (LLWAMSFIFVVCVAVVMWAEV), 327–347 (FGVLASSLFAVVTTAASCGAV), 356–376 (ALGGMVPMWLMQIGEVVFGGV), 379–399 (GLYGMLLFVLLAVFIAGLMIG), 416–436 (MTALAILVTPMLVLLGSALAM), 484–504 (LLAFCMFVGRFGVIIPVMAIA), and 524–544 (GALFIGLLIGTVLLVGALTFI).

The protein belongs to the KdpA family. As to quaternary structure, the system is composed of three essential subunits: KdpA, KdpB and KdpC.

It is found in the cell inner membrane. Part of the high-affinity ATP-driven potassium transport (or Kdp) system, which catalyzes the hydrolysis of ATP coupled with the electrogenic transport of potassium into the cytoplasm. This subunit binds the periplasmic potassium ions and delivers the ions to the membrane domain of KdpB through an intramembrane tunnel. This is Potassium-transporting ATPase potassium-binding subunit from Salmonella enteritidis PT4 (strain P125109).